Reading from the N-terminus, the 46-residue chain is Iota-conotoxin-like R11.7 (46 aa).

4-hydroxyproline is present on residues P2 and P11. 4 disulfide bridges follow: C5–C19, C12–C22, C18–C27, and C21–C38. At P29 the chain carries 4-hydroxyproline. The residue at position 44 (F44) is a D-phenylalanine.

The protein belongs to the conotoxin I1 superfamily. In terms of tissue distribution, expressed by the venom duct.

Its subcellular location is the secreted. Its function is as follows. Iota-conotoxins bind to voltage-gated sodium channels (Nav) and act as agonists by shifting the voltage-dependence of activation to more hyperpolarized levels. Produces general excitatory symptoms. This chain is Iota-conotoxin-like R11.7, found in Conus radiatus (Rayed cone).